The chain runs to 103 residues: Nucleoid-associated protein BH0035 (103 aa).

Positions 1-20 are enriched in low complexity; that stretch reads MKNMGQMMKQMQKMQKQMMK. The tract at residues 1-29 is disordered; sequence MKNMGQMMKQMQKMQKQMMKAQEELKEKT.

Belongs to the YbaB/EbfC family. Homodimer.

Its subcellular location is the cytoplasm. It is found in the nucleoid. Functionally, binds to DNA and alters its conformation. May be involved in regulation of gene expression, nucleoid organization and DNA protection. The chain is Nucleoid-associated protein BH0035 from Halalkalibacterium halodurans (strain ATCC BAA-125 / DSM 18197 / FERM 7344 / JCM 9153 / C-125) (Bacillus halodurans).